A 1159-amino-acid polypeptide reads, in one-letter code: Cation channel sperm-associated auxiliary subunit gamma (1159 aa).

The signal sequence occupies residues 1–35 (MCGPAMFPAGPRWPRVRVLQVLWALLAVLLASRRL). Topologically, residues 36-1065 (WAIKDFEECT…IHGLPLSPKR (1030 aa)) are extracellular. Intrachain disulfides connect C44/C105 and C159/C165. N-linked (GlcNAc...) asparagine glycosylation is present at N102. N177 carries an N-linked (GlcNAc...) asparagine glycan. C288 and C343 are joined by a disulfide. Residue N355 is glycosylated (N-linked (GlcNAc...) asparagine). An intrachain disulfide couples C394 to C402. N426 and N574 each carry an N-linked (GlcNAc...) asparagine glycan. 5 disulfides stabilise this stretch: C638–C860, C806–C834, C882–C1046, C909–C918, and C1010–C1016. The helical transmembrane segment at 1066 to 1087 (ALFILMVSLSVFVGLVIFYIAF) threads the bilayer. The Cytoplasmic segment spans residues 1088–1159 (CLLWPLVVKG…KEAVERQLMT (72 aa)). A disordered region spans residues 1138–1159 (FSSRMTEDKAEPKEAVERQLMT). The segment covering 1142–1159 (MTEDKAEPKEAVERQLMT) has biased composition (basic and acidic residues).

This sequence belongs to the CATSPERG family. Component of the CatSper complex or CatSpermasome composed of the core pore-forming members CATSPER1, CATSPER2, CATSPER3 and CATSPER4 as well as auxiliary members CATSPERB, CATSPERG, CATSPERD, CATSPERE, CATSPERZ, SCLO6C1, TMEM249, TMEM262 and EFCAB9. HSPA1 may be an additional auxiliary complex member. The core complex members CATSPER1, CATSPER2, CATSPER3 and CATSPER4 form a heterotetrameric channel. The auxiliary CATSPERB, CATSPERG, CATSPERD and CATSPERE subunits form a pavilion-like structure over the pore which stabilizes the complex through interactions with CATSPER4, CATSPER3, CATSPER1 and CATSPER2 respectively. TMEM262/CATSPERH interacts with CATSPERB, further stabilizing the complex. C2CD6/CATSPERT interacts at least with CATSPERD and is required for targeting the CatSper complex in the flagellar membrane.

The protein resides in the cell projection. It localises to the cilium. The protein localises to the flagellum membrane. Functionally, auxiliary component of the CatSper complex, a complex involved in sperm cell hyperactivation. Sperm cell hyperactivation is needed for sperm motility which is essential late in the preparation of sperm for fertilization. This chain is Cation channel sperm-associated auxiliary subunit gamma, found in Macaca fascicularis (Crab-eating macaque).